The following is a 311-amino-acid chain: Methionyl-tRNA formyltransferase (311 aa).

110 to 113 (SLLP) contacts (6S)-5,6,7,8-tetrahydrofolate.

The protein belongs to the Fmt family.

The catalysed reaction is L-methionyl-tRNA(fMet) + (6R)-10-formyltetrahydrofolate = N-formyl-L-methionyl-tRNA(fMet) + (6S)-5,6,7,8-tetrahydrofolate + H(+). In terms of biological role, attaches a formyl group to the free amino group of methionyl-tRNA(fMet). The formyl group appears to play a dual role in the initiator identity of N-formylmethionyl-tRNA by promoting its recognition by IF2 and preventing the misappropriation of this tRNA by the elongation apparatus. The sequence is that of Methionyl-tRNA formyltransferase from Streptococcus pneumoniae serotype 19F (strain G54).